Here is a 500-residue protein sequence, read N- to C-terminus: Cholesterol 24-hydroxylase (500 aa).

A helical transmembrane segment spans residues P3–V23. C437 serves as a coordination point for heme.

It belongs to the cytochrome P450 family. It depends on heme as a cofactor. Expressed in brain. The mRNA was broadly distributed with higher levels in gray matter zones and lower levels in regions rich in white matter. Not detected in fetal sample but its expression increases linearly with age.

It is found in the endoplasmic reticulum membrane. It localises to the microsome membrane. The protein resides in the postsynapse. Its subcellular location is the presynapse. The protein localises to the cell projection. It is found in the dendrite. The catalysed reaction is cholesterol + reduced [NADPH--hemoprotein reductase] + O2 = (24S)-hydroxycholesterol + oxidized [NADPH--hemoprotein reductase] + H2O + H(+). The enzyme catalyses cholestanol + reduced [NADPH--hemoprotein reductase] + O2 = (24S)-hydroxycholestanol + oxidized [NADPH--hemoprotein reductase] + H2O + H(+). It catalyses the reaction 7-dehydrocholesterol + reduced [NADPH--hemoprotein reductase] + O2 = cholesta-5,7-dien-3beta,24S-diol + oxidized [NADPH--hemoprotein reductase] + H2O + H(+). It carries out the reaction 7-dehydrocholesterol + reduced [NADPH--hemoprotein reductase] + O2 = cholesta-5,7-dien-3beta,25-diol + oxidized [NADPH--hemoprotein reductase] + H2O + H(+). The catalysed reaction is desmosterol + reduced [NADPH--hemoprotein reductase] + O2 = (24Z),26-hydroxydesmosterol + oxidized [NADPH--hemoprotein reductase] + H2O + H(+). The enzyme catalyses desmosterol + reduced [NADPH--hemoprotein reductase] + O2 = (24S)-25-epoxycholesterol + oxidized [NADPH--hemoprotein reductase] + H2O + H(+). It catalyses the reaction 4beta-hydroxycholesterol + reduced [NADPH--hemoprotein reductase] + O2 = 4beta,24S-dihydroxycholesterol + oxidized [NADPH--hemoprotein reductase] + H2O + H(+). It carries out the reaction (24S)-hydroxycholesterol + reduced [NADPH--hemoprotein reductase] + O2 = (24S,25R)-24,26-dihydroxycholesterol + oxidized [NADPH--hemoprotein reductase] + H2O + H(+). The catalysed reaction is (24S)-hydroxycholesterol + reduced [NADPH--hemoprotein reductase] + O2 = 24S,25-dihydroxycholesterol + oxidized [NADPH--hemoprotein reductase] + H2O + H(+). The enzyme catalyses 7alpha-hydroxycholesterol + reduced [NADPH--hemoprotein reductase] + O2 = (24S)-7alpha-dihydroxycholesterol + oxidized [NADPH--hemoprotein reductase] + H2O + H(+). It catalyses the reaction progesterone + reduced [NADPH--hemoprotein reductase] + O2 = 17alpha-hydroxyprogesterone + oxidized [NADPH--hemoprotein reductase] + H2O + H(+). It carries out the reaction testosterone + reduced [NADPH--hemoprotein reductase] + O2 = 16beta,17beta-dihydroxyandrost-4-en-3-one + oxidized [NADPH--hemoprotein reductase] + H2O + H(+). The catalysed reaction is testosterone + reduced [NADPH--hemoprotein reductase] + O2 = 2-hydroxytestosterone + oxidized [NADPH--hemoprotein reductase] + H2O + H(+). The enzyme catalyses testosterone + reduced [NADPH--hemoprotein reductase] + O2 = 6beta,17beta-dihydroxyandrost-4-en-3-one + oxidized [NADPH--hemoprotein reductase] + H2O + H(+). The protein operates within steroid metabolism; cholesterol degradation. It functions in the pathway lipid metabolism; C21-steroid hormone metabolism. In terms of biological role, P450 monooxygenase that plays a major role in cholesterol homeostasis in the brain. Primarily catalyzes the hydroxylation (with S stereochemistry) at C-24 of cholesterol side chain, triggering cholesterol diffusion out of neurons and its further degradation. By promoting constant cholesterol elimination in neurons, may activate the mevalonate pathway and coordinate the synthesis of new cholesterol and nonsterol isoprenoids involved in synaptic activity and learning. Further hydroxylates cholesterol derivatives and hormone steroids on both the ring and side chain of these molecules, converting them into active oxysterols involved in lipid signaling and biosynthesis. Acts as an epoxidase converting cholesta-5,24-dien-3beta-ol/desmosterol into (24S),25-epoxycholesterol, an abundant lipid ligand of nuclear NR1H2 and NR1H3 receptors shown to promote neurogenesis in developing brain. May also catalyze the oxidative metabolism of xenobiotics, such as clotrimazole. The polypeptide is Cholesterol 24-hydroxylase (Homo sapiens (Human)).